Consider the following 343-residue polypeptide: Tribbles homolog 2 (343 aa).

The tract at residues 25–50 (EELSSIRSAEPSQSFSPNLGSPSPPE) is disordered. A compositionally biased stretch (polar residues) spans 29–45 (SIRSAEPSQSFSPNLGS). Residues 61 to 308 (IGKYLLLEPL…SQEILDHPWF (248 aa)) enclose the Protein kinase domain.

This sequence belongs to the protein kinase superfamily. CAMK Ser/Thr protein kinase family. Tribbles subfamily.

Its subcellular location is the cytoplasm. It localises to the cytoskeleton. Its function is as follows. Interacts with MAPK kinases and regulates activation of MAP kinases. Does not display kinase activity. The protein is Tribbles homolog 2 of Mus musculus (Mouse).